A 203-amino-acid chain; its full sequence is Small ribosomal subunit protein uS4 (203 aa).

In terms of domain architecture, S4 RNA-binding spans 93–156 (QRLDNVVFRL…MKVPAILEAV (64 aa)).

It belongs to the universal ribosomal protein uS4 family. Part of the 30S ribosomal subunit. Contacts protein S5. The interaction surface between S4 and S5 is involved in control of translational fidelity.

Its function is as follows. One of the primary rRNA binding proteins, it binds directly to 16S rRNA where it nucleates assembly of the body of the 30S subunit. Functionally, with S5 and S12 plays an important role in translational accuracy. The polypeptide is Small ribosomal subunit protein uS4 (Lactococcus lactis subsp. lactis (strain IL1403) (Streptococcus lactis)).